Here is a 289-residue protein sequence, read N- to C-terminus: MASLKDLRNRIASVKATQKITKAMQMVAAAKLRRAQMAAEAARPYAERMDSVLGNIASGVTLSADTPLLLSGTGKDEKHLLLVCTSERGLCGAFNTNIVRAVRERANLLIGQGKDVKFFCVGRKGYDQLRRLYPGQIVELVDLRSVRNLGFVNAHDIAEKIIDRFNKGEFDVCTLFFSHFKSVISQVPTAQQIIPATFEKAEGPSAVYDYEPEESEILADLLPRNVAVQIFRALLENQASFYGSQMSAMDNATRNAGDMIKKQTLIYNRTRQAMITKELIEIISGAEAV.

This sequence belongs to the ATPase gamma chain family. In terms of assembly, F-type ATPases have 2 components, CF(1) - the catalytic core - and CF(0) - the membrane proton channel. CF(1) has five subunits: alpha(3), beta(3), gamma(1), delta(1), epsilon(1). CF(0) has three main subunits: a, b and c.

The protein resides in the cell inner membrane. Functionally, produces ATP from ADP in the presence of a proton gradient across the membrane. The gamma chain is believed to be important in regulating ATPase activity and the flow of protons through the CF(0) complex. This Azorhizobium caulinodans (strain ATCC 43989 / DSM 5975 / JCM 20966 / LMG 6465 / NBRC 14845 / NCIMB 13405 / ORS 571) protein is ATP synthase gamma chain.